We begin with the raw amino-acid sequence, 1034 residues long: Translation initiation factor IF-2 (1034 aa).

Disordered stretches follow at residues Ala118 to Glu140 and Glu154 to Ala446. Composition is skewed to low complexity over residues Thr162–Pro178 and Pro212–Ser228. The span at Asp304 to Glu315 shows a compositional bias: basic and acidic residues. A tr-type G domain is found at Pro535–Glu702. Residues Gly544–Thr551 form a G1 region. Residue Gly544 to Thr551 coordinates GTP. Residues Gly569 to His573 are G2. The segment at Asp590 to Gly593 is G3. Residues Asp590–His594 and Asn644–Asp647 contribute to the GTP site. Positions Asn644–Asp647 are G4. Positions Ser680–Lys682 are G5.

The protein belongs to the TRAFAC class translation factor GTPase superfamily. Classic translation factor GTPase family. IF-2 subfamily.

The protein localises to the cytoplasm. In terms of biological role, one of the essential components for the initiation of protein synthesis. Protects formylmethionyl-tRNA from spontaneous hydrolysis and promotes its binding to the 30S ribosomal subunits. Also involved in the hydrolysis of GTP during the formation of the 70S ribosomal complex. This is Translation initiation factor IF-2 from Bordetella avium (strain 197N).